We begin with the raw amino-acid sequence, 297 residues long: Trimeric intracellular cation channel type A (297 aa).

Residues 1 to 18 (MDLISSLSLGELALSFSR) are Lumenal-facing. A helical transmembrane segment spans residues 19 to 39 (VPLFPVFDLSYFIVSIIYLKY). The Cytoplasmic portion of the chain corresponds to 40–51 (EPGSVELSRRHP). A helical transmembrane segment spans residues 52 to 72 (VASWLCAMLHCFGSYILADLL). Residues 73 to 85 (LGEPIIDYFSNSS) lie on the Lumenal side of the membrane. Glycine 74 contacts Ca(2+). The chain crosses the membrane as a helical span at residues 86-106 (SILLASGVWYLIFFCPLDLFY). Residues 107-143 (KCVCFLPVKLIFVAMKEVVRVRKIAVGIHHAHHYHHG) are Cytoplasmic-facing. A 1,2-diacyl-sn-glycero-3-phospho-(1D-myo-inositol-4,5-bisphosphate)-binding residues include lysine 122 and arginine 126. A helical membrane pass occupies residues 144-164 (WFIMIATGWVKGSGVALLSNL). Topologically, residues 165-177 (EQLLRGVWKPETN) are lumenal. The chain crosses the membrane as a helical span at residues 178–198 (EILHMSFPTKASLYGAILFTL). Over 199–208 (QQTRWLPVSK) the chain is Cytoplasmic. The helical transmembrane segment at 209 to 229 (ASLIFVFTMFMVSCKVFLTAT) threads the bilayer. Residues 230-233 (HSHS) lie on the Lumenal side of the membrane. Residues 234 to 254 (SPFDVLEGYICPVLFGATWGG) traverse the membrane as a helical segment. Over 255-297 (DHHHDNHGAPHGMGLGTQHSGLPAKAKEELSEGFRKKKTKKAD) the chain is Cytoplasmic. Positions 259-297 (DNHGAPHGMGLGTQHSGLPAKAKEELSEGFRKKKTKKAD) are disordered. Basic and acidic residues predominate over residues 279–288 (KAKEELSEGF).

It belongs to the TMEM38 family. In terms of assembly, homotrimer; conformation seems to be controled by binding to diacylglycerol (DAG).

Its subcellular location is the sarcoplasmic reticulum membrane. The protein resides in the nucleus membrane. It catalyses the reaction K(+)(in) = K(+)(out). With respect to regulation, channel activity is activated by a change of voltage within the sarcoplasmic reticulum lumen and blocked by luminal high Ca(2+) levels. Its function is as follows. Intracellular monovalent cation channel required for maintenance of rapid intracellular calcium release. Acts as a potassium counter-ion channel that functions in synchronization with calcium release from intracellular stores. Opened by a change of voltage within the sarcoplasmic reticulum lumen. This Rattus norvegicus (Rat) protein is Trimeric intracellular cation channel type A.